Reading from the N-terminus, the 286-residue chain is NADH-cytochrome b5 reductase 1 (286 aa).

The chain crosses the membrane as a helical span at residues 6 to 26; it reads FILVIIGSVALAAGVKYVFTL. The region spanning 52-155 is the FAD-binding FR-type domain; it reads QEYRKFQLKE…KGPKGKFNYQ (104 aa). FAD-binding positions include 135-150 and 161-193; these read DNMF…GPKG and SIGM…EISL.

The protein belongs to the flavoprotein pyridine nucleotide cytochrome reductase family. As to quaternary structure, monomer. FAD serves as cofactor.

It localises to the endoplasmic reticulum membrane. It is found in the mitochondrion outer membrane. It carries out the reaction 2 Fe(III)-[cytochrome b5] + NADH = 2 Fe(II)-[cytochrome b5] + NAD(+) + H(+). In terms of biological role, electron donor reductase for cytochrome b5. The cytochrome b5/NADH cytochrome b5 reductase electron transfer system supports the catalytic activity of several sterol biosynthetic enzymes. The sequence is that of NADH-cytochrome b5 reductase 1 (cyb5r1) from Dictyostelium discoideum (Social amoeba).